A 616-amino-acid polypeptide reads, in one-letter code: Membrane protein insertase YidC (616 aa).

The chain crosses the membrane as a helical span at residues I9–P29. The segment at Q37–P80 is disordered. Residues L44–T71 are compositionally biased toward polar residues. The next 4 helical transmembrane spans lie at F388–F408, L462–I482, V520–F540, and W559–W579.

Belongs to the OXA1/ALB3/YidC family. Type 1 subfamily. Interacts with the Sec translocase complex via SecD. Specifically interacts with transmembrane segments of nascent integral membrane proteins during membrane integration.

It is found in the cell inner membrane. Required for the insertion and/or proper folding and/or complex formation of integral membrane proteins into the membrane. Involved in integration of membrane proteins that insert both dependently and independently of the Sec translocase complex, as well as at least some lipoproteins. Aids folding of multispanning membrane proteins. The chain is Membrane protein insertase YidC from Bradyrhizobium diazoefficiens (strain JCM 10833 / BCRC 13528 / IAM 13628 / NBRC 14792 / USDA 110).